The primary structure comprises 376 residues: 1-deoxy-D-xylulose 5-phosphate reductoisomerase (376 aa).

Residues serine 10, glycine 11, serine 12, valine 13, glycine 36, lysine 37, asparagine 38, and asparagine 118 each contribute to the NADPH site. Lysine 119 is a binding site for 1-deoxy-D-xylulose 5-phosphate. Glutamate 120 contacts NADPH. Aspartate 144 serves as a coordination point for Mn(2+). 1-deoxy-D-xylulose 5-phosphate contacts are provided by serine 145, glutamate 146, serine 170, and histidine 193. Glutamate 146 serves as a coordination point for Mn(2+). Glycine 199 serves as a coordination point for NADPH. Residues serine 206, asparagine 211, lysine 212, and glutamate 215 each coordinate 1-deoxy-D-xylulose 5-phosphate. Mn(2+) is bound at residue glutamate 215.

Belongs to the DXR family. The cofactor is Mg(2+). Mn(2+) serves as cofactor.

The catalysed reaction is 2-C-methyl-D-erythritol 4-phosphate + NADP(+) = 1-deoxy-D-xylulose 5-phosphate + NADPH + H(+). It functions in the pathway isoprenoid biosynthesis; isopentenyl diphosphate biosynthesis via DXP pathway; isopentenyl diphosphate from 1-deoxy-D-xylulose 5-phosphate: step 1/6. Catalyzes the NADPH-dependent rearrangement and reduction of 1-deoxy-D-xylulose-5-phosphate (DXP) to 2-C-methyl-D-erythritol 4-phosphate (MEP). The polypeptide is 1-deoxy-D-xylulose 5-phosphate reductoisomerase (Macrococcus caseolyticus (strain JCSC5402) (Macrococcoides caseolyticum)).